A 95-amino-acid polypeptide reads, in one-letter code: Defensin-like protein 232 (95 aa).

A signal peptide spans 1-26 (MRCTTLIMVSFVVSCLLLSLVEESEA). 4 disulfide bridges follow: C33–C94, C43–C68, C51–C84, and C66–C86.

This sequence belongs to the DEFL family. Flower buds.

Its subcellular location is the secreted. This is Defensin-like protein 232 (SCRL23) from Arabidopsis thaliana (Mouse-ear cress).